The following is a 4841-amino-acid chain: Nonribosomal peptide synthetase 2 (4841 aa).

The adenylation 1 stretch occupies residues 26 to 429; that stretch reads VKPPNQNVAL…GRLSDGQVKL (404 aa). The Carrier 1 domain occupies 531 to 604; that stretch reads EPVDEFESSL…DIIFAARRQI (74 aa). Serine 565 is subject to O-(pantetheine 4'-phosphoryl)serine. Residues 640–1042 are condensation 1; that stretch reads EEIIPCTPLQ…ILERPTQEIK (403 aa). The adenylation 2 stretch occupies residues 1072-1463; that stretch reads FEDVVRKHPE…GRIDDQVKLR (392 aa). Residues 1587-1665 enclose the Carrier 2 domain; the sequence is EGDWSRMDLV…QLAKHLEGKP (79 aa). Position 1625 is an O-(pantetheine 4'-phosphoryl)serine (serine 1625). The tract at residues 1702 to 2043 is condensation 2; sequence ILPCTPLQEA…QTVWELEADS (342 aa). In terms of domain architecture, Carrier 3 spans 2139-2212; sequence SEVELDVRQV…KIAAKLLENR (74 aa). Serine 2173 bears the O-(pantetheine 4'-phosphoryl)serine mark. The condensation 3 stretch occupies residues 2248–2663; the sequence is AVLPCTPLQS…NHLATEDEAF (416 aa). Residues 2695–3090 are adenylation 3; that stretch reads AAVHPNKLAL…GRADDQVKLR (396 aa). Residues 3219–3293 form the Carrier 4 domain; it reads QDILVLLYDA…DLANCLAKAA (75 aa). Serine 3253 is modified (O-(pantetheine 4'-phosphoryl)serine). The segment at 3333–3735 is condensation 4; it reads IAPCSPLQEG…DLAAESPQSE (403 aa). The region spanning 3759 to 3838 is the Carrier 5 domain; the sequence is QNSFEWTSEA…KMITELASIT (80 aa). Serine 3799 carries the post-translational modification O-(pantetheine 4'-phosphoryl)serine. The segment at 3873–4242 is condensation 5; sequence SVLPPTHLQE…VEAEAVSDSL (370 aa). The 77-residue stretch at 4318–4394 folds into the Carrier 6 domain; that stretch reads IEWNQNEIGI…EMAQKADTKL (77 aa). Serine 4355 is modified (O-(pantetheine 4'-phosphoryl)serine). Residues 4430–4726 are condensation 6; it reads EVLPALPMQV…DIHLITSESR (297 aa).

This sequence belongs to the NRP synthetase family.

Its pathway is siderophore biosynthesis. Its function is as follows. Nonribosomal peptide synthetase; part of the gene cluster that mediates the biosynthesis of hydroxamate-containing siderophores that play a critical role in virulence. Gibberella zeae produces extracellular coprogen-type siderophores as well as the intracellular siderophore ferricrocin. The role of extracellular siderophores is to supply iron to the fungus during plant infection, and the intracellular ferricrocin is required for intracellular iron distribution and storage with a crucial role in ascus and ascospore development. SID1 catalyzes the conversion of L-ornithine to N(5)-hydroxyornithine, the first step in the biosynthesis of all hydroxamate-containing siderophores. The assembly of extracellular coprogen-type siderophores is performed by the nonribosomal peptide synthetase (NRPS) NPS6 whereas the intracellular siderophore ferricrocin is assembled by NPS2. In Gibberella zeae (strain ATCC MYA-4620 / CBS 123657 / FGSC 9075 / NRRL 31084 / PH-1) (Wheat head blight fungus), this protein is Nonribosomal peptide synthetase 2.